The primary structure comprises 219 residues: Regulatory protein YeiL (219 aa).

The tract at residues 19–97 (RLFHFLARDY…IEECWCLALP (79 aa)) is sensory domain. [4Fe-4S] cluster contacts are provided by Cys68, Cys91, Cys93, and Cys116. Residues 111–131 (FLRKLCVTLSHKNYRNIVSLT) form a dimer interface region. One can recognise an HTH crp-type domain in the interval 136 to 199 (FPLVNRLAAF…KKGYLIKNRK (64 aa)). Positions 158–181 (KHTQAAEYLGVSYRHLLYVLAQFI) form a DNA-binding region, H-T-H motif.

Homodimer. Requires [4Fe-4S] cluster as cofactor.

Its subcellular location is the cytoplasm. Transcription regulator involved in mid-term, stationary-phase viability under nitrogen starvation. Might control expression of the salvage pathways or in some other way repress the recycling of nucleobases to nucleic acids and enhance their use as general nitrogen sources during nitrogen-limited growth. This Escherichia coli O157:H7 protein is Regulatory protein YeiL (yeiL).